A 218-amino-acid chain; its full sequence is uncharacterized protein (218 aa).

Residues histidine 57, histidine 59, aspartate 61, histidine 62, histidine 138, aspartate 158, and histidine 199 each coordinate Zn(2+).

It belongs to the metallo-beta-lactamase superfamily. Glyoxalase II family. Zn(2+) is required as a cofactor.

This is an uncharacterized protein from Mycobacterium leprae (strain TN).